The sequence spans 421 residues: 3-isopropylmalate dehydratase large subunit (421 aa).

Residues Cys-302, Cys-362, and Cys-365 each contribute to the [4Fe-4S] cluster site.

This sequence belongs to the aconitase/IPM isomerase family. LeuC type 2 subfamily. Heterodimer of LeuC and LeuD. Requires [4Fe-4S] cluster as cofactor.

The catalysed reaction is (2R,3S)-3-isopropylmalate = (2S)-2-isopropylmalate. Its pathway is amino-acid biosynthesis; L-leucine biosynthesis; L-leucine from 3-methyl-2-oxobutanoate: step 2/4. Functionally, catalyzes the isomerization between 2-isopropylmalate and 3-isopropylmalate, via the formation of 2-isopropylmaleate. The chain is 3-isopropylmalate dehydratase large subunit from Campylobacter concisus (strain 13826).